The following is a 288-amino-acid chain: Thymidylate synthase (288 aa).

Residues Arg-21 and Arg-150–Arg-151 each bind dUMP. Cys-170 serves as the catalytic Nucleophile. DUMP contacts are provided by residues Arg-190 to Asp-193, Asn-201, and His-231 to Tyr-233. Asp-193 is a (6R)-5,10-methylene-5,6,7,8-tetrahydrofolate binding site. Ala-287 contributes to the (6R)-5,10-methylene-5,6,7,8-tetrahydrofolate binding site.

Belongs to the thymidylate synthase family. Bacterial-type ThyA subfamily. As to quaternary structure, homodimer.

The protein localises to the cytoplasm. It carries out the reaction dUMP + (6R)-5,10-methylene-5,6,7,8-tetrahydrofolate = 7,8-dihydrofolate + dTMP. It participates in pyrimidine metabolism; dTTP biosynthesis. Its function is as follows. Catalyzes the reductive methylation of 2'-deoxyuridine-5'-monophosphate (dUMP) to 2'-deoxythymidine-5'-monophosphate (dTMP) while utilizing 5,10-methylenetetrahydrofolate (mTHF) as the methyl donor and reductant in the reaction, yielding dihydrofolate (DHF) as a by-product. This enzymatic reaction provides an intracellular de novo source of dTMP, an essential precursor for DNA biosynthesis. This is Thymidylate synthase from Acholeplasma laidlawii (strain PG-8A).